The following is a 46-amino-acid chain: Protein PsbN (46 aa).

A helical membrane pass occupies residues 10-30 (LAIIVLVVLLGLTGLGVYMAF).

Belongs to the PsbN family.

The protein resides in the cellular thylakoid membrane. In terms of biological role, may play a role in photosystem I and II biogenesis. The chain is Protein PsbN from Prochlorococcus marinus (strain MIT 9211).